The primary structure comprises 124 residues: ATP synthase epsilon chain (124 aa).

Positions 97–124 (ARVREASSEEEKSRAESELRAVKRSKEK) are disordered.

Belongs to the ATPase epsilon chain family. F-type ATPases have 2 components, CF(1) - the catalytic core - and CF(0) - the membrane proton channel. CF(1) has five subunits: alpha(3), beta(3), gamma(1), delta(1), epsilon(1). CF(0) has three main subunits: a, b and c.

Its subcellular location is the cell membrane. Produces ATP from ADP in the presence of a proton gradient across the membrane. In Corynebacterium urealyticum (strain ATCC 43042 / DSM 7109), this protein is ATP synthase epsilon chain.